The primary structure comprises 260 residues: Indole-3-glycerol phosphate synthase (260 aa).

It belongs to the TrpC family.

The catalysed reaction is 1-(2-carboxyphenylamino)-1-deoxy-D-ribulose 5-phosphate + H(+) = (1S,2R)-1-C-(indol-3-yl)glycerol 3-phosphate + CO2 + H2O. The protein operates within amino-acid biosynthesis; L-tryptophan biosynthesis; L-tryptophan from chorismate: step 4/5. In Staphylococcus aureus (strain Mu3 / ATCC 700698), this protein is Indole-3-glycerol phosphate synthase.